The sequence spans 115 residues: Meiotically up-regulated gene 168 protein (115 aa).

Residues 82–115 form a disordered region; the sequence is SVSPVHTKAEEPGLGLTPMNSADFSNKIASRYRS. The span at 99 to 109 shows a compositional bias: polar residues; that stretch reads PMNSADFSNKI.

The protein resides in the nucleus. Its function is as follows. Has a role in meiosis. The protein is Meiotically up-regulated gene 168 protein (mug168) of Schizosaccharomyces pombe (strain 972 / ATCC 24843) (Fission yeast).